Here is a 234-residue protein sequence, read N- to C-terminus: uncharacterized protein (234 aa).

Gly68–Ser70 contributes to the L-glutamine binding site. Catalysis depends on Cys101, which acts as the Nucleophile. L-glutamine contacts are provided by residues Arg131 and Ile167–Arg168. Residues His208 and Glu210 each act as charge relay system in the active site.

Belongs to the glutaminase PdxT/SNO family.

The protein localises to the cytoplasm. It carries out the reaction L-glutamine + H2O = L-glutamate + NH4(+). This is an uncharacterized protein from Schizosaccharomyces pombe (strain 972 / ATCC 24843) (Fission yeast).